The following is a 117-amino-acid chain: Immunoglobulin lambda variable 2 (117 aa).

The first 19 residues, 1–19 (MAWTSLILSLLALCSGASS), serve as a signal peptide directing secretion. Pyrrolidone carboxylic acid is present on Gln20. The 98-residue stretch at 20–117 (QAVVTQESAL…FCALWYSTHF (98 aa)) folds into the Ig-like domain.

This is Immunoglobulin lambda variable 2 from Mus musculus (Mouse).